A 490-amino-acid chain; its full sequence is Betaine aldehyde dehydrogenase (490 aa).

Aspartate 93 serves as a coordination point for K(+). 150 to 152 (GAW) contacts NAD(+). Lysine 162 (charge relay system) is an active-site residue. 176–179 (KPSE) is an NAD(+) binding site. Residue valine 180 participates in K(+) binding. An NAD(+)-binding site is contributed by 230 to 233 (GIAS). Residue leucine 246 participates in K(+) binding. The Proton acceptor role is filled by glutamate 252. Positions 254, 286, and 387 each coordinate NAD(+). The Nucleophile role is filled by cysteine 286. The residue at position 286 (cysteine 286) is a Cysteine sulfenic acid (-SOH). K(+) contacts are provided by lysine 457 and glycine 460. The active-site Charge relay system is glutamate 464.

This sequence belongs to the aldehyde dehydrogenase family. In terms of assembly, dimer of dimers. Requires K(+) as cofactor.

The enzyme catalyses betaine aldehyde + NAD(+) + H2O = glycine betaine + NADH + 2 H(+). It participates in amine and polyamine biosynthesis; betaine biosynthesis via choline pathway; betaine from betaine aldehyde: step 1/1. Its function is as follows. Involved in the biosynthesis of the osmoprotectant glycine betaine. Catalyzes the irreversible oxidation of betaine aldehyde to the corresponding acid. The chain is Betaine aldehyde dehydrogenase from Pectobacterium carotovorum subsp. carotovorum (strain PC1).